The chain runs to 254 residues: Sec-independent protein translocase protein TatC (254 aa).

6 helical membrane-spanning segments follow: residues 40 to 60, 82 to 104, 125 to 145, 172 to 192, 210 to 230, and 233 to 253; these read IFLS…FVKP, FFFV…FILY, VVLG…YALI, FVLL…IQVV, FVIL…DPLT, and LLAG…RLLG.

This sequence belongs to the TatC family. Forms a complex with TatA.

It localises to the cell inner membrane. In terms of biological role, part of the twin-arginine translocation (Tat) system that transports large folded proteins containing a characteristic twin-arginine motif in their signal peptide across membranes. In Synechocystis sp. (strain ATCC 27184 / PCC 6803 / Kazusa), this protein is Sec-independent protein translocase protein TatC.